The primary structure comprises 166 residues: Probable protein tyrosine phosphatase type IVA A (166 aa).

Residues 10-164 enclose the Tyrosine-protein phosphatase domain; it reads NPASLVESST…YKSKKKSSCR (155 aa). Cys52 and Cys107 form a disulfide bridge. The active-site Proton donor is Asp75. Residue Cys107 is the Phosphocysteine intermediate of the active site. 108-113 contributes to the phosphate binding site; sequence VAGLGR. A substrate-binding site is contributed by Arg113. Cys163 is subject to Cysteine methyl ester. Residue Cys163 is the site of S-farnesyl cysteine attachment. A propeptide spans 164–166 (removed in mature form); that stretch reads RIM.

The protein belongs to the protein-tyrosine phosphatase family.

The protein localises to the membrane. The catalysed reaction is O-phospho-L-tyrosyl-[protein] + H2O = L-tyrosyl-[protein] + phosphate. The polypeptide is Probable protein tyrosine phosphatase type IVA A (Dictyostelium discoideum (Social amoeba)).